Consider the following 216-residue polypeptide: Inorganic pyrophosphatase (216 aa).

Residues Lys-39, Arg-53, and Tyr-65 each contribute to the substrate site. Positions 93, 98, and 131 each coordinate Mg(2+). Tyr-168 contributes to the substrate binding site.

Belongs to the PPase family. Homohexamer. Mg(2+) serves as cofactor.

The protein localises to the cytoplasm. The catalysed reaction is diphosphate + H2O = 2 phosphate + H(+). In terms of biological role, catalyzes the hydrolysis of inorganic pyrophosphate (PPi) forming two phosphate ions. The protein is Inorganic pyrophosphatase of Chlamydia caviae (strain ATCC VR-813 / DSM 19441 / 03DC25 / GPIC) (Chlamydophila caviae).